A 414-amino-acid polypeptide reads, in one-letter code: Isocitrate dehydrogenase [NADP] cytoplasmic (414 aa).

N-acetylserine is present on Ser2. Tyr42 bears the Phosphotyrosine mark. Position 75-77 (75-77 (TIT)) interacts with NADP(+). Residue Thr77 coordinates substrate. N6-acetyllysine is present on Lys81. Arg82 contributes to the NADP(+) binding site. Substrate contacts are provided by residues 94-100 (SPNGTIR) and Arg109. The residue at position 126 (Lys126) is an N6-succinyllysine. Substrate is bound by residues Arg132 and Lys212. N6-acetyllysine is present on residues Lys224 and Lys233. Asp252 is a binding site for Mn(2+). Lys260 serves as a coordination point for NADP(+). Mn(2+)-binding residues include Asp275 and Asp279. 310-315 (GTVTRH) lines the NADP(+) pocket. An N6-acetyllysine modification is found at Lys321. Asn328 provides a ligand contact to NADP(+). At Ser389 the chain carries Phosphoserine. Lys400 is subject to N6-succinyllysine.

Belongs to the isocitrate and isopropylmalate dehydrogenases family. In terms of assembly, homodimer. It depends on Mg(2+) as a cofactor. Requires Mn(2+) as cofactor. Acetylation at Lys-374 dramatically reduces catalytic activity.

The protein resides in the cytoplasm. The protein localises to the cytosol. It catalyses the reaction D-threo-isocitrate + NADP(+) = 2-oxoglutarate + CO2 + NADPH. Catalyzes the NADP(+)-dependent oxidative decarboxylation of isocitrate (D-threo-isocitrate) to 2-ketoglutarate (2-oxoglutarate), which is required by other enzymes such as the phytanoyl-CoA dioxygenase. Plays a critical role in the generation of NADPH, an important cofactor in many biosynthesis pathways. May act as a corneal epithelial crystallin and may be involved in maintaining corneal epithelial transparency. In Ovis aries (Sheep), this protein is Isocitrate dehydrogenase [NADP] cytoplasmic (IDH1).